Consider the following 216-residue polypeptide: Urease accessory protein UreG (216 aa).

Glycine 24–threonine 31 contributes to the GTP binding site.

It belongs to the SIMIBI class G3E GTPase family. UreG subfamily. Homodimer. UreD, UreF and UreG form a complex that acts as a GTP-hydrolysis-dependent molecular chaperone, activating the urease apoprotein by helping to assemble the nickel containing metallocenter of UreC. The UreE protein probably delivers the nickel.

It localises to the cytoplasm. Facilitates the functional incorporation of the urease nickel metallocenter. This process requires GTP hydrolysis, probably effectuated by UreG. In Variovorax paradoxus (strain S110), this protein is Urease accessory protein UreG.